The following is a 1086-amino-acid chain: ATP-dependent helicase/deoxyribonuclease subunit B (1086 aa).

The protein belongs to the helicase family. AddB/RexB type 2 subfamily. In terms of assembly, heterodimer of AddA and RexB. Mg(2+) is required as a cofactor.

The heterodimer acts as both an ATP-dependent DNA helicase and an ATP-dependent, dual-direction single-stranded exonuclease. Recognizes the chi site generating a DNA molecule suitable for the initiation of homologous recombination. This subunit has 5' -&gt; 3' nuclease activity but not helicase activity. This is ATP-dependent helicase/deoxyribonuclease subunit B from Streptococcus uberis (strain ATCC BAA-854 / 0140J).